Here is a 293-residue protein sequence, read N- to C-terminus: Elongation factor Ts (293 aa).

The involved in Mg(2+) ion dislocation from EF-Tu stretch occupies residues 80–83 (TDFV).

Belongs to the EF-Ts family.

The protein localises to the cytoplasm. Associates with the EF-Tu.GDP complex and induces the exchange of GDP to GTP. It remains bound to the aminoacyl-tRNA.EF-Tu.GTP complex up to the GTP hydrolysis stage on the ribosome. In Burkholderia vietnamiensis (strain G4 / LMG 22486) (Burkholderia cepacia (strain R1808)), this protein is Elongation factor Ts.